A 461-amino-acid polypeptide reads, in one-letter code: TWiK family of potassium channels protein 18 (461 aa).

At 1 to 21 (MAIVAQGVSTILTTFQKTFKG) the chain is on the cytoplasmic side. The chain crosses the membrane as a helical span at residues 22–42 (LLPLIILVAYTLLGAWIFWMI). N-linked (GlcNAc...) asparagine glycosylation is present at Asn-88. The segment at residues 116–136 (FLGSIFYCMTVYTTIGYGNIV) is an intramembrane region (pore-forming). Residues 144 to 164 (FATILYAFIGIPLTVLSLYCL) traverse the membrane as a helical segment. Over 165 to 224 (GSLFAKGCKMLWRFFLKSTRVVSKDLSNKISEAADNIEEGTTAITPSAEKTENNDDDLLS) the chain is Cytoplasmic. The chain crosses the membrane as a helical span at residues 225–245 (FPISGLLLITVIWVIFCAVLF). The segment at residues 253-273 (FGTSLYFTLISFTTIGFGDIL) is an intramembrane region (pore-forming). Residues 281–301 (PIVGVLLLIGLSLVSTVMTLI) traverse the membrane as a helical segment. Residues 302–461 (QQQIEALASG…GNEDYLEHDI (160 aa)) lie on the Cytoplasmic side of the membrane. The segment at 328-347 (REDGEVDEHVDPEEDPENNK) is disordered.

It belongs to the two pore domain potassium channel (TC 1.A.1.8) family. As to expression, expressed in body wall muscle.

The protein resides in the membrane. Outwardly rectifying potassium channel protein; activity is sharply augmented by increase in temperature. This chain is TWiK family of potassium channels protein 18 (twk-18), found in Caenorhabditis elegans.